Consider the following 515-residue polypeptide: Protein disulfide-isomerase (515 aa).

Positions 1–20 are cleaved as a signal peptide; that stretch reads MRTFAPWILSLLGASAVASA. 2 Thioredoxin domains span residues 21-136 and 343-470; these read ADAT…QSLP and VLDD…ENGK. Catalysis depends on nucleophile residues Cys58, Cys61, Cys393, and Cys396. 2 disulfides stabilise this stretch: Cys58-Cys61 and Cys393-Cys396. 2 stretches are compositionally biased toward basic and acidic residues: residues 472 to 496 and 506 to 515; these read KVDA…RAAS and SDDKSEHDEL. The interval 472–515 is disordered; sequence KVDALEVDPKKEQESGDATETRAASDETETPAATSDDKSEHDEL. The Prevents secretion from ER signature appears at 512–515; sequence HDEL.

Belongs to the protein disulfide isomerase family.

The protein resides in the endoplasmic reticulum lumen. It catalyses the reaction Catalyzes the rearrangement of -S-S- bonds in proteins.. Participates in the folding of proteins containing disulfide bonds, may be involved in glycosylation, prolyl hydroxylation and triglyceride transfer. In Aspergillus oryzae (strain ATCC 42149 / RIB 40) (Yellow koji mold), this protein is Protein disulfide-isomerase (pdiA).